Here is a 505-residue protein sequence, read N- to C-terminus: Kinesin light chain 3 (505 aa).

The tract at residues 1 to 20 (MSVQVAAPGSTGLGPERLNP) is disordered. The stretch at 90–150 (ALSAHVGVLE…EEEKSHLQFL (61 aa)) forms a coiled coil. Positions 154 to 197 (RQYDPPEESQRPDSPPRRDSLASLFPSEEEEKKGPEAAGAAAAQ) are disordered. Residues 161–173 (ESQRPDSPPRRDS) show a composition bias toward basic and acidic residues. Ser-173 bears the Phosphoserine mark. 5 TPR repeats span residues 207–240 (LRTLHNLVIQYASQGRYEVAVPLCRQALEDLERS), 249–282 (ATMLNILALVYRDQNKYKEATELLHDALQIREQT), 291–324 (AATLNNLAVLYGKRGRYREAEPLCQRALEIREKV), 333–366 (AKQLNNLALLCQNQGKFQDVERHYARALSIYEAL), and 375–408 (AKTKNNLASAYLKQNKYQQAEELYKEILSQEALP). A disordered region spans residues 409-439 (APLGAPQGGTAGEAQQQVLRRSSSFSKLRES). Over residues 421-434 (EAQQQVLRRSSSFS) the composition is skewed to polar residues. Phosphoserine is present on Ser-467. The interval 486 to 505 (QHLNEASRTLSASTQDLSPR) is disordered. Position 499 is a phosphothreonine (Thr-499). A Phosphoserine modification is found at Ser-503.

The protein belongs to the kinesin light chain family. As to quaternary structure, oligomer composed of two heavy chains and two light chains. Associates with microtubulin in an ATP-dependent manner. Interacts with KIF5C. Interacts with ODF1. Interacts with LRGUK. Interacts with VDAC2. In terms of tissue distribution, expressed in postmeiotic male germ cells (at protein level).

Its subcellular location is the cytoplasm. The protein localises to the cytoskeleton. It localises to the mitochondrion. Kinesin is a microtubule-associated force-producing protein that may play a role in organelle transport. Plays a role during spermiogenesis in the development of the sperm tail midpiece and in the normal function of spermatozoa. May play a role in the formation of the mitochondrial sheath formation in the developing spermatid midpiece. The sequence is that of Kinesin light chain 3 (Klc3) from Rattus norvegicus (Rat).